Here is a 212-residue protein sequence, read N- to C-terminus: Adenylate kinase (212 aa).

Position 10–15 (10–15 (GAGKGT)) interacts with ATP. The segment at 30–59 (STGDMFRAAMANQTEMGTLAKSFIDKGELV) is NMP. Residues Thr-31, Arg-36, 57 to 59 (ELV), 86 to 89 (GYPR), and Gln-93 each bind AMP. Residues 127–159 (GRIINRKTGETYHKVFNPPADYNEDDYYQREDD) are LID. Residues Arg-128 and 137–138 (TY) contribute to the ATP site. Positions 156 and 167 each coordinate AMP. Gln-195 serves as a coordination point for ATP.

Belongs to the adenylate kinase family. Monomer.

Its subcellular location is the cytoplasm. It catalyses the reaction AMP + ATP = 2 ADP. The protein operates within purine metabolism; AMP biosynthesis via salvage pathway; AMP from ADP: step 1/1. In terms of biological role, catalyzes the reversible transfer of the terminal phosphate group between ATP and AMP. Plays an important role in cellular energy homeostasis and in adenine nucleotide metabolism. The protein is Adenylate kinase of Streptococcus mutans serotype c (strain ATCC 700610 / UA159).